Reading from the N-terminus, the 297-residue chain is MDCQENEYRDQWGRCVTCQQCGPGQELSKDCGYGEGGDAHCIVCPPRKYKSTWGHHRCQTCITCAVINRVQKANCTNTSNAICGDCLPRFYRKTRIGGLQDQECIPCTKQTPSSEVQCTFQLSLVKVDAHTVPPREATLVALVGSLLVVFALAFLGLFFLYCKQIFNRHCQCRDSLQYEAEKTVEEDSLFPVPPGQETSPEFPANEGILEIKPLNSILDDDCSSTRGFPTQESFTMASCASESHSQWVHTPIECTELDLQKFSSSIPSTGPETLRENTAEHSGDRLELYVPFEVPSL.

At 1 to 138 (MDCQENEYRD…AHTVPPREAT (138 aa)) the chain is on the extracellular side. 3 TNFR-Cys repeats span residues 2 to 41 (DCQE…DAHC), 43 to 83 (VCPP…NAIC), and 85 to 118 (DCLP…EVQC). 8 disulfides stabilise this stretch: cysteine 3/cysteine 15, cysteine 18/cysteine 31, cysteine 21/cysteine 41, cysteine 44/cysteine 58, cysteine 61/cysteine 75, cysteine 64/cysteine 83, cysteine 86/cysteine 104, and cysteine 107/cysteine 118. N-linked (GlcNAc...) asparagine glycosylation is found at asparagine 74 and asparagine 77. Residues 139-159 (LVALVGSLLVVFALAFLGLFF) traverse the membrane as a helical; Signal-anchor for type III membrane protein segment. Over 160 to 297 (LYCKQIFNRH…LYVPFEVPSL (138 aa)) the chain is Cytoplasmic.

In terms of assembly, associates with TRAF1, TRAF3 and TRAF6.

Its subcellular location is the membrane. Functionally, receptor for EDA isoform A2, but not for EDA isoform A1. Mediates the activation of the NF-kappa-B and JNK pathways. Activation seems to be mediated by binding to TRAF3 and TRAF6. The sequence is that of Tumor necrosis factor receptor superfamily member 27 (Eda2r) from Mus musculus (Mouse).